A 1198-amino-acid chain; its full sequence is Rac guanine nucleotide exchange factor B (1198 aa).

Residues 1–104 (MFSNFFGSSK…QHQGVITSLQ (104 aa)) are disordered. Residues 8 to 20 (SSKRNTIASSSSS) show a composition bias toward low complexity. Basic and acidic residues predominate over residues 21–34 (SKKDKDNGKDESSK). Over residues 35–58 (LKNSGSSTLPKPITNNESGNNFIT) the composition is skewed to polar residues. The span at 59-97 (SPSVSSPLISPLSSSPSPLLSSSSNSIQSTSHQQQQQHQ) shows a compositional bias: low complexity. Residues 126-232 (SSLEQTARKW…NIVVLGKHAS (107 aa)) enclose the Calponin-homology (CH) 1 domain. A disordered region spans residues 260-284 (FGGNHNNNNNNNNNNNTSNGDLSPV). The span at 263 to 275 (NHNNNNNNNNNNN) shows a compositional bias: low complexity. Calponin-homology (CH) domains lie at 341-449 (PELQ…NKMY) and 511-619 (PEDM…ENFD). Positions 632–846 (RRQKVIEEII…KRVADHVNES (215 aa)) constitute a DH domain. The PH domain occupies 876-1026 (TYIREGFLEI…WMEDLRSCLQ (151 aa)). Residues 940–952 (GEACVDGDDDGGE) are compositionally biased toward acidic residues. 2 disordered regions span residues 940–989 (GEAC…SNKS) and 1076–1198 (NNNN…IDNQ). Low complexity-rich tracts occupy residues 977–989 (NSNNNNNSNSNKS) and 1076–1118 (NNNN…NNND). The segment covering 1155–1167 (DETISDTESDDYE) has biased composition (acidic residues). Over residues 1188 to 1198 (FSDTIKNIDNQ) the composition is skewed to polar residues.

In terms of assembly, binds to F-actin.

The protein localises to the late endosome. Its function is as follows. Involved in the regulation of the late steps of the endocytic pathway. The protein is Rac guanine nucleotide exchange factor B (gxcB) of Dictyostelium discoideum (Social amoeba).